We begin with the raw amino-acid sequence, 901 residues long: HTH-type transcriptional regulator MalT (901 aa).

39–46 (SPAGYGKT) contacts ATP. Positions 829 to 894 (ELIRTSPLTQ…DAVQHAQQLL (66 aa)) constitute an HTH luxR-type domain. Residues 853 to 872 (NDQIAGELDVAATTIKTHIR) constitute a DNA-binding region (H-T-H motif).

The protein belongs to the MalT family. As to quaternary structure, monomer in solution. Oligomerizes to an active state in the presence of the positive effectors ATP and maltotriose.

Its activity is regulated as follows. Activated by ATP and maltotriose, which are both required for DNA binding. Its function is as follows. Positively regulates the transcription of the maltose regulon whose gene products are responsible for uptake and catabolism of malto-oligosaccharides. Specifically binds to the promoter region of its target genes, recognizing a short DNA motif called the MalT box. The sequence is that of HTH-type transcriptional regulator MalT from Cronobacter sakazakii (strain ATCC BAA-894) (Enterobacter sakazakii).